A 213-amino-acid chain; its full sequence is ATP-dependent dethiobiotin synthetase BioD (213 aa).

12-17 (EVGKTY) contacts ATP. Threonine 16 serves as a coordination point for Mg(2+). The active site involves lysine 37. Residues aspartate 46, 107–110 (EGVG), and 167–168 (NN) contribute to the ATP site. The Mg(2+) site is built by aspartate 46 and glutamate 107.

The protein belongs to the dethiobiotin synthetase family. Homodimer. Mg(2+) is required as a cofactor.

The protein resides in the cytoplasm. It carries out the reaction (7R,8S)-7,8-diammoniononanoate + CO2 + ATP = (4R,5S)-dethiobiotin + ADP + phosphate + 3 H(+). Its pathway is cofactor biosynthesis; biotin biosynthesis; biotin from 7,8-diaminononanoate: step 1/2. Functionally, catalyzes a mechanistically unusual reaction, the ATP-dependent insertion of CO2 between the N7 and N8 nitrogen atoms of 7,8-diaminopelargonic acid (DAPA, also called 7,8-diammoniononanoate) to form a ureido ring. In Akkermansia muciniphila (strain ATCC BAA-835 / DSM 22959 / JCM 33894 / BCRC 81048 / CCUG 64013 / CIP 107961 / Muc), this protein is ATP-dependent dethiobiotin synthetase BioD.